A 71-amino-acid polypeptide reads, in one-letter code: Small integral membrane protein 31 (71 aa).

A helical membrane pass occupies residues 8-28; that stretch reads LEMAFILLAFVIFSLFTLASI. The interval 31–71 is disordered; it reads TPDDSNEEEEHEKKGREKKRKKSEKKKNCSEEEHRIEAVEL. Residues 46–55 are compositionally biased toward basic residues; sequence REKKRKKSEK. Basic and acidic residues predominate over residues 56–71; sequence KKNCSEEEHRIEAVEL. N-linked (GlcNAc...) asparagine glycosylation is present at asparagine 58.

Its subcellular location is the membrane. The polypeptide is Small integral membrane protein 31 (Homo sapiens (Human)).